The primary structure comprises 173 residues: Alpha-crystallin A chain (173 aa).

Met-1 is modified (N-acetylmethionine). Residues Met-1–Glu-63 form a required for complex formation with BFSP1 and BFSP2 region. Gln-6 is modified (deamidated glutamine; partial). Position 45 is a phosphoserine (Ser-45). Gln-50 is modified (deamidated glutamine; partial). The region spanning Leu-52–Ser-162 is the sHSP domain. Lys-70 and Lys-99 each carry N6-acetyllysine. His-100 contacts Zn(2+). At Asn-101 the chain carries Deamidated asparagine; partial. Zn(2+) is bound by residues Glu-102 and His-107. At Ser-122 the chain carries Phosphoserine. Asn-123 bears the Deamidated asparagine; partial mark. The disordered stretch occupies residues Pro-144–Ser-173. The span at Gly-153 to Pro-167 shows a compositional bias: basic and acidic residues. Zn(2+) is bound at residue His-154. Residue Ser-162 is glycosylated (O-linked (GlcNAc) serine).

The protein belongs to the small heat shock protein (HSP20) family. As to quaternary structure, heteromer composed of three CRYAA and one CRYAB subunits. Inter-subunit bridging via zinc ions enhances stability, which is crucial as there is no protein turn over in the lens. Can also form homodimers and homotetramers (dimers of dimers) which serve as the building blocks of homooligomers. Within homooligomers, the zinc-binding motif is created from residues of 3 different molecules. His-100 and Glu-102 from one molecule are ligands of the zinc ion, and His-107 and His-154 residues from additional molecules complete the site with tetrahedral coordination geometry. Part of a complex required for lens intermediate filament formation composed of BFSP1, BFSP2 and CRYAA. Acetylation at Lys-70 may increase chaperone activity. In terms of processing, undergoes age-dependent proteolytical cleavage at the C-terminus.

It localises to the cytoplasm. Its subcellular location is the nucleus. Its function is as follows. Contributes to the transparency and refractive index of the lens. Acts as a chaperone, preventing aggregation of various proteins under a wide range of stress conditions. Required for the correct formation of lens intermediate filaments as part of a complex composed of BFSP1, BFSP2 and CRYAA. This is Alpha-crystallin A chain (CRYAA) from Canis lupus familiaris (Dog).